The following is a 565-amino-acid chain: MPASDSAEWELPRLRTSFIFQDDYKYLGDDGSVSQDLAEFFDVKFYPYSPPGAPPVFAATSKKHAVICRLTQTTDKDANPCEIIQLIRDDGNEANCASCWSKDPITDQPLLCIAGNEGNVKVYNVTEGKLYRTLVGHGGGINDLATSPANPYIIASASDDTTIRIWSLAPEHEKQPCVCILGGEGHSYDLLSVAFHDNGRYVLSAGHDQVINLWALPEFPNEHMEIPIVIYYPHFSSSEIHNNLVDCVAFYGDLILSRACHEDTIVLWRIEGFSSDDPIPGPLDAPTPTDMTKQTRSYFTPTVSPQSRPAMFTRLAQFHTPDCGVQFFMRFRMYHVPGKHPILAFANAKSKTFFWDLARFGEYARFMADLKEAQQSYNGRVVVVDQGQGISLAQAQQVHGPGVGVVMKPAWLVPKRVKKAPGAAGSGSGTAANGGHNNNNNNNNNNNNNNHETGSQRSFSATNNLSNSGRDKESASMVSASPDPDSPFGFSRETLQAWADMYDLSNPVGLIKAHRSLAIDGAFVGRQVGWSPEGEWCVVVGNGNRALIYQRWGKERGLGSGTPGA.

WD repeat units lie at residues 89 to 133 (DDGN…LYRT), 136 to 176 (GHGG…EKQP), 185 to 224 (GHSY…NEHM), and 240 to 278 (IHNN…SDDP). The disordered stretch occupies residues 417 to 488 (VKKAPGAAGS…SASPDPDSPF (72 aa)). Over residues 429–450 (GTAANGGHNNNNNNNNNNNNNN) the composition is skewed to low complexity. Over residues 451–468 (HETGSQRSFSATNNLSNS) the composition is skewed to polar residues. One copy of the WD 5 repeat lies at 519–559 (IDGAFVGRQVGWSPEGEWCVVVGNGNRALIYQRWGKERGLG).

The protein belongs to the WD repeat ESC family. Component of the polycomb repressive complex 2 (PRC2) that consists of four core subunits icluding EZH2, EED, SUZ12, and RBBP4, among which EZH2 is the catalytic subunit and which minimally requires EED and SUZ12 for catalysis.

Its subcellular location is the nucleus. Its function is as follows. Component of the of the Polycomb Repressive Complex 2 (PRC2), a histone H3 lysine methyltransferase responsible for generating mono-, di-, and tri-methylation on Lys27 (H3K27me1, H3K27me2 and H3K27me3). The tri-methylated form is known to be critical in gene repression, and its proper placement is essential in defining repression patterns during development. EED is not a catalytic subunit but is required for the complex regulation of histone H3 lysine methylation by EZH2. This Chaetomium thermophilum (strain DSM 1495 / CBS 144.50 / IMI 039719) (Thermochaetoides thermophila) protein is Polycomb protein EED.